A 151-amino-acid chain; its full sequence is MKKIDVKILDPRVGKEFPLPTYATSGSAGLDLRACLDDAVELAPGDTTLVPTGLAIHIADPSLAAMMLPRSGLGHKHGIVLGNLVGLIDSDYQGQLMISVWNRGQDNFTIQPGERIAQMIFVPVVQAEFNLVEDFDATDRGEGGFGHSGRQ.

Substrate is bound by residues arginine 70 to glycine 72, asparagine 83, leucine 87 to aspartate 89, and methionine 97.

It belongs to the dUTPase family. As to quaternary structure, homotrimer. The cofactor is Mg(2+).

The enzyme catalyses dUTP + H2O = dUMP + diphosphate + H(+). It participates in pyrimidine metabolism; dUMP biosynthesis; dUMP from dCTP (dUTP route): step 2/2. Its function is as follows. This enzyme is involved in nucleotide metabolism: it produces dUMP, the immediate precursor of thymidine nucleotides and it decreases the intracellular concentration of dUTP so that uracil cannot be incorporated into DNA. The chain is Deoxyuridine 5'-triphosphate nucleotidohydrolase from Escherichia coli O45:K1 (strain S88 / ExPEC).